We begin with the raw amino-acid sequence, 378 residues long: Chorismate synthase (378 aa).

Positions 48 and 54 each coordinate NADP(+). Residues 125–127 (RSS), 238–239 (NA), Gly278, 293–297 (KPTSS), and Arg319 contribute to the FMN site.

This sequence belongs to the chorismate synthase family. In terms of assembly, homotetramer. The cofactor is FMNH2.

The catalysed reaction is 5-O-(1-carboxyvinyl)-3-phosphoshikimate = chorismate + phosphate. The protein operates within metabolic intermediate biosynthesis; chorismate biosynthesis; chorismate from D-erythrose 4-phosphate and phosphoenolpyruvate: step 7/7. In terms of biological role, catalyzes the anti-1,4-elimination of the C-3 phosphate and the C-6 proR hydrogen from 5-enolpyruvylshikimate-3-phosphate (EPSP) to yield chorismate, which is the branch point compound that serves as the starting substrate for the three terminal pathways of aromatic amino acid biosynthesis. This reaction introduces a second double bond into the aromatic ring system. This is Chorismate synthase from Azoarcus sp. (strain BH72).